The sequence spans 413 residues: Phosphopentomutase (413 aa).

Mn(2+) contacts are provided by aspartate 11, aspartate 306, histidine 311, aspartate 347, histidine 348, and histidine 359.

The protein belongs to the phosphopentomutase family. It depends on Mn(2+) as a cofactor.

The protein resides in the cytoplasm. It catalyses the reaction 2-deoxy-alpha-D-ribose 1-phosphate = 2-deoxy-D-ribose 5-phosphate. It carries out the reaction alpha-D-ribose 1-phosphate = D-ribose 5-phosphate. Its pathway is carbohydrate degradation; 2-deoxy-D-ribose 1-phosphate degradation; D-glyceraldehyde 3-phosphate and acetaldehyde from 2-deoxy-alpha-D-ribose 1-phosphate: step 1/2. Isomerase that catalyzes the conversion of deoxy-ribose 1-phosphate (dRib-1-P) and ribose 1-phosphate (Rib-1-P) to deoxy-ribose 5-phosphate (dRib-5-P) and ribose 5-phosphate (Rib-5-P), respectively. The protein is Phosphopentomutase of Helicobacter pylori (strain ATCC 700392 / 26695) (Campylobacter pylori).